The primary structure comprises 545 residues: Lysine--tRNA ligase (545 aa).

The short motif at 41–49 is the 'HIGH' region element; the sequence is PSGVPHLGH. Positions 306–310 match the 'KMSKS' region motif; that stretch reads ALSSS.

It belongs to the class-I aminoacyl-tRNA synthetase family.

The protein localises to the cytoplasm. The catalysed reaction is tRNA(Lys) + L-lysine + ATP = L-lysyl-tRNA(Lys) + AMP + diphosphate. The protein is Lysine--tRNA ligase of Natronomonas pharaonis (strain ATCC 35678 / DSM 2160 / CIP 103997 / JCM 8858 / NBRC 14720 / NCIMB 2260 / Gabara) (Halobacterium pharaonis).